Consider the following 185-residue polypeptide: MNVSHPAVHPVGVPPALGGQAVPPRMRMRVRMEYLVFQGMPLPGSLGGLMLRLGQFCSALIAFSVMVSIRDFSVTAFCYLLAATVLQCLWSLALAVIDVYALLVKRSLRNPLLVSIFVVGDGVTATLTFAAACASAGVVVLIGNDISMCKSNPCANYEAAIIMAFLSWFMVSISFVLTFWMLATL.

Residues 1-48 are Cytoplasmic-facing; sequence MNVSHPAVHPVGVPPALGGQAVPPRMRMRVRMEYLVFQGMPLPGSLGG. A helical membrane pass occupies residues 49–69; the sequence is LMLRLGQFCSALIAFSVMVSI. The Extracellular segment spans residues 70–76; it reads RDFSVTA. Residues 77-97 form a helical membrane-spanning segment; that stretch reads FCYLLAATVLQCLWSLALAVI. Residues 98 to 121 are Cytoplasmic-facing; that stretch reads DVYALLVKRSLRNPLLVSIFVVGD. The chain crosses the membrane as a helical span at residues 122–142; sequence GVTATLTFAAACASAGVVVLI. The Extracellular portion of the chain corresponds to 143-160; the sequence is GNDISMCKSNPCANYEAA. The chain crosses the membrane as a helical span at residues 161 to 181; sequence IIMAFLSWFMVSISFVLTFWM. Topologically, residues 182–185 are cytoplasmic; it reads LATL.

Belongs to the Casparian strip membrane proteins (CASP) family. In terms of assembly, homodimer and heterodimers.

Its subcellular location is the cell membrane. This Pinus contorta (Shore pine) protein is CASP-like protein 5A1.